We begin with the raw amino-acid sequence, 58 residues long: MSFDKKLLEIVACPVCKGKLDYDKAKQQLICKLDRLAYPINDGIPVLLENKAESWEEA.

It belongs to the UPF0434 family.

The chain is UPF0434 protein Swoo_1821 from Shewanella woodyi (strain ATCC 51908 / MS32).